An 863-amino-acid chain; its full sequence is MEDALIADEQLDRYPIGSDPWIDSLRDIDSDAMELDDLDVSKLNVEQAVRLWSRLSAWVEGDQVAYYVKDAPLSSDAAYDARMNCLKRLESEFPQLDTPQSPTHRVGGTFSNDFTAVRHPSQMMSLDDVFSFEELRAWYDGVRKDLEWPEDKLLPMTCEVKIDGLALNLIYRNGVLTQGLTRGDGVTGEDITMNVRTIHSIPTNLDGPEGDIPDMVEIRGEVFMRWDDFHKLNEANEDAGRPPFANPRNAAAGSLRQKDPRITAQRHLSFYAHGIGELVWGSGKPVDVADEVRNQSDAYTMYRKWGVPISPHNREVTDFDQILDMIEYYGEHRGDIEHALDGIVVKVDDLALQRRLGSTSRAPRWAIAYKYPPEEVNTKLLNIVVQVGRTGRVTPVAILNPVYVAGSTVSRTTLHNAYEVKRKGILIGDTVVVRKAGDVIPELVGPVIAKREGHEQDLREFVMPTRCPSCDTVLRYEKEGDKDLRCPNSESCPAQLAERVINLAARKAFDIEHLGDQSAVALTNPEDNRPDSVEAYAPGVREIVVEPGEEPAPYLAPSGLELPPIQEPVLTSEANLFDLEASDLRDVYVWREAQIIEVRRHVDSHGKERKVRHRLGGSGLWHREPAFWSGVKDAPLKKDANRKTVKDSEGNPEYEVKPDAVIVGHGRNGRPRIEEPTENTRKMLDEIEKAKHTDLSRVLVALSIRHVGPPTAFTLAKHFKTLDALADASAEELEQIDGIGAEIADSIATFFEEARMPGNWRGRVLEAWKAAGVGMSTHDEGLPQTLEGKSVVVTGTLEHFSRESAKEAIERRGGKASGSVSRKTDWVVVGANPGSKATKAEELGIPIIDEQQFDTLLATGDVQ.

Residues 76–80, 125–126, and E159 each bind NAD(+); these read DAAYD and SL. K161 (N6-AMP-lysine intermediate) is an active-site residue. 2 residues coordinate NAD(+): R182 and E221. The disordered stretch occupies residues 237-256; sequence EDAGRPPFANPRNAAAGSLR. Residues 241–253 are compositionally biased toward low complexity; it reads RPPFANPRNAAAG. K346 and K370 together coordinate NAD(+). Positions 467, 470, 486, and 492 each coordinate Zn(2+). The region spanning 781–863 is the BRCT domain; sequence GLPQTLEGKS…DTLLATGDVQ (83 aa).

It belongs to the NAD-dependent DNA ligase family. LigA subfamily. The cofactor is Mg(2+). Mn(2+) serves as cofactor.

The catalysed reaction is NAD(+) + (deoxyribonucleotide)n-3'-hydroxyl + 5'-phospho-(deoxyribonucleotide)m = (deoxyribonucleotide)n+m + AMP + beta-nicotinamide D-nucleotide.. DNA ligase that catalyzes the formation of phosphodiester linkages between 5'-phosphoryl and 3'-hydroxyl groups in double-stranded DNA using NAD as a coenzyme and as the energy source for the reaction. It is essential for DNA replication and repair of damaged DNA. The sequence is that of DNA ligase from Bifidobacterium animalis subsp. lactis (strain AD011).